The chain runs to 238 residues: D-aminoacyl-tRNA deacylase (238 aa).

Belongs to the DtdA deacylase family. As to quaternary structure, monomer. Zn(2+) serves as cofactor.

The catalysed reaction is a D-aminoacyl-tRNA + H2O = a tRNA + a D-alpha-amino acid + H(+). The enzyme catalyses glycyl-tRNA(Ala) + H2O = tRNA(Ala) + glycine + H(+). It carries out the reaction D-tyrosyl-tRNA(Tyr) + H2O = D-tyrosine + tRNA(Tyr). Functionally, D-aminoacyl-tRNA deacylase with broad substrate specificity. By recycling D-aminoacyl-tRNA to D-amino acids and free tRNA molecules, this enzyme counteracts the toxicity associated with the formation of D-aminoacyl-tRNA entities in vivo. Catalyzes the hydrolysis of D-tyrosyl-tRNA(Tyr). This chain is D-aminoacyl-tRNA deacylase, found in Saccharolobus solfataricus (strain ATCC 35092 / DSM 1617 / JCM 11322 / P2) (Sulfolobus solfataricus).